Consider the following 331-residue polypeptide: L-lactate dehydrogenase A chain (331 aa).

Residues 29-57 (GMVGMASAISILLKDLCDELAMVDVMEDK) and R98 each bind NAD(+). Residues R105, N137, and R168 each coordinate substrate. Residue N137 participates in NAD(+) binding. The active-site Proton acceptor is H192. Position 247 (T247) interacts with substrate.

The protein belongs to the LDH/MDH superfamily. LDH family. As to quaternary structure, homotetramer.

The protein resides in the cytoplasm. It catalyses the reaction (S)-lactate + NAD(+) = pyruvate + NADH + H(+). Its pathway is fermentation; pyruvate fermentation to lactate; (S)-lactate from pyruvate: step 1/1. Interconverts simultaneously and stereospecifically pyruvate and lactate with concomitant interconversion of NADH and NAD(+). This Patagonotothen tessellata (Black southern cod) protein is L-lactate dehydrogenase A chain (ldha).